The sequence spans 229 residues: ATP-dependent dethiobiotin synthetase BioD (229 aa).

G12 to I17 provides a ligand contact to ATP. T16 lines the Mg(2+) pocket. The active site involves K38. Residues D46, E105–G108, and S165–E166 contribute to the ATP site. 2 residues coordinate Mg(2+): D46 and E105.

This sequence belongs to the dethiobiotin synthetase family. In terms of assembly, homodimer. The cofactor is Mg(2+).

It is found in the cytoplasm. The catalysed reaction is (7R,8S)-7,8-diammoniononanoate + CO2 + ATP = (4R,5S)-dethiobiotin + ADP + phosphate + 3 H(+). It catalyses the reaction (7R,8S)-8-amino-7-(carboxyamino)nonanoate + ATP = (4R,5S)-dethiobiotin + ADP + phosphate + H(+). It participates in cofactor biosynthesis; biotin biosynthesis; biotin from 7,8-diaminononanoate: step 1/2. Catalyzes a mechanistically unusual reaction, the ATP-dependent insertion of CO2 between the N7 and N8 nitrogen atoms of 7,8-diaminopelargonic acid (DAPA, also called 7,8-diammoniononanoate) to form a ureido ring. This cyanobacterium does not encode bioA (which catalyzes the formation of the precursor for this reaction in the cannonical pathway), instead it encodes bioU, which replaces bioA and also performs the first half of the cannonical BioD reaction. Thus in this organism BioD has a different substrate. The polypeptide is ATP-dependent dethiobiotin synthetase BioD (Gloeobacter violaceus (strain ATCC 29082 / PCC 7421)).